The primary structure comprises 84 residues: Cytochrome b559 subunit alpha (84 aa).

A helical transmembrane segment spans residues 22–36 (VIHSITIPSLFVAGW). H24 serves as a coordination point for heme.

The protein belongs to the PsbE/PsbF family. As to quaternary structure, heterodimer of an alpha subunit and a beta subunit. PSII is composed of 1 copy each of membrane proteins PsbA, PsbB, PsbC, PsbD, PsbE, PsbF, PsbH, PsbI, PsbJ, PsbK, PsbL, PsbM, PsbT, PsbX, PsbY, PsbZ, Psb30/Ycf12, at least 3 peripheral proteins of the oxygen-evolving complex and a large number of cofactors. It forms dimeric complexes. Heme b serves as cofactor.

The protein resides in the plastid. The protein localises to the chloroplast thylakoid membrane. Its function is as follows. This b-type cytochrome is tightly associated with the reaction center of photosystem II (PSII). PSII is a light-driven water:plastoquinone oxidoreductase that uses light energy to abstract electrons from H(2)O, generating O(2) and a proton gradient subsequently used for ATP formation. It consists of a core antenna complex that captures photons, and an electron transfer chain that converts photonic excitation into a charge separation. The polypeptide is Cytochrome b559 subunit alpha (Gracilaria tenuistipitata var. liui (Red alga)).